The sequence spans 731 residues: E3 ubiquitin-protein ligase SMURF1 (731 aa).

The C2 domain occupies 1-120; that stretch reads MSNVVTRRGG…TGYQRLDLCK (120 aa). Positions 210-235 are disordered; the sequence is RVRGPEVREHVQTPQNRSHGFQSQDL. Polar residues predominate over residues 221–234; that stretch reads QTPQNRSHGFQSQD. 2 WW domains span residues 233 to 266 and 279 to 312; these read QDLP…DPRI and GSLP…DPRL. The region spanning 394–731 is the HECT domain; that stretch reads RPKDLKKRLM…VEETSGFAVE (338 aa). The Glycyl thioester intermediate role is filled by cysteine 699.

The protein localises to the cytoplasm. It localises to the cell membrane. The enzyme catalyses S-ubiquitinyl-[E2 ubiquitin-conjugating enzyme]-L-cysteine + [acceptor protein]-L-lysine = [E2 ubiquitin-conjugating enzyme]-L-cysteine + N(6)-ubiquitinyl-[acceptor protein]-L-lysine.. The protein operates within protein modification; protein ubiquitination. In terms of biological role, E3 ubiquitin-protein ligase that acts as a negative regulator of BMP signaling pathway. Mediates ubiquitination and degradation of smad1 and smad5, 2 receptor-regulated SMADs specific for the BMP pathway. Promotes ubiquitination and subsequent proteasomal degradation of TRAF family members and rhoa. May play a role in dendrite formation by melanocytes. This is E3 ubiquitin-protein ligase SMURF1 (smurf1) from Xenopus laevis (African clawed frog).